The chain runs to 229 residues: Potassium/proton antiporter CemA (229 aa).

4 helical membrane passes run 7-27 (LASLPYLVSIIFLPWWVSLSF), 106-126 (IILHFSTNLICFAILSGYFFL), 154-174 (ILLVTDLWIGFHSTHGWELMI), and 189-209 (IISGLVSTFPVILDTIVKYWI).

The protein belongs to the CemA family.

Its subcellular location is the plastid. It is found in the chloroplast inner membrane. The enzyme catalyses K(+)(in) + H(+)(out) = K(+)(out) + H(+)(in). In terms of biological role, contributes to K(+)/H(+) antiport activity by supporting proton efflux to control proton extrusion and homeostasis in chloroplasts in a light-dependent manner to modulate photosynthesis. Prevents excessive induction of non-photochemical quenching (NPQ) under continuous-light conditions. Indirectly promotes efficient inorganic carbon uptake into chloroplasts. This Phalaenopsis aphrodite subsp. formosana (Moth orchid) protein is Potassium/proton antiporter CemA.